A 74-amino-acid polypeptide reads, in one-letter code: MDAVQELERRIVELEIQTALQEDVISGLNAMVAELRQTLDLQQAQLRLLYQKMQDRNPDAQEPYSLRDEIPPHY.

Positions 54-74 (QDRNPDAQEPYSLRDEIPPHY) are disordered.

This sequence belongs to the SlyX family.

This Neisseria gonorrhoeae (strain ATCC 700825 / FA 1090) protein is Protein SlyX homolog.